The following is a 105-amino-acid chain: Putative membrane protein insertion efficiency factor (105 aa).

Residues 68 to 105 are disordered; that stretch reads FHPGGLDPVPPRRNESGTEISDARPGSDGEASPGAPGL. A compositionally biased stretch (basic and acidic residues) spans 77-94; the sequence is PPRRNESGTEISDARPGS.

It belongs to the UPF0161 family.

The protein localises to the cell membrane. In terms of biological role, could be involved in insertion of integral membrane proteins into the membrane. This is Putative membrane protein insertion efficiency factor from Thermobifida fusca (strain YX).